We begin with the raw amino-acid sequence, 718 residues long: DNA ligase (718 aa).

Residues 34–38 (DAEYD), 83–84 (SL), and Glu-115 each bind NAD(+). The active-site N6-AMP-lysine intermediate is the Lys-117. The NAD(+) site is built by Arg-138, Glu-186, Lys-302, and Lys-326. Residues Cys-420, Cys-423, Cys-438, and Cys-444 each contribute to the Zn(2+) site. A BRCT domain is found at 604-694 (PKGDALAGKT…DRSAPAASNN (91 aa)).

Belongs to the NAD-dependent DNA ligase family. LigA subfamily. Mg(2+) serves as cofactor. Mn(2+) is required as a cofactor.

The enzyme catalyses NAD(+) + (deoxyribonucleotide)n-3'-hydroxyl + 5'-phospho-(deoxyribonucleotide)m = (deoxyribonucleotide)n+m + AMP + beta-nicotinamide D-nucleotide.. Its function is as follows. DNA ligase that catalyzes the formation of phosphodiester linkages between 5'-phosphoryl and 3'-hydroxyl groups in double-stranded DNA using NAD as a coenzyme and as the energy source for the reaction. It is essential for DNA replication and repair of damaged DNA. The chain is DNA ligase from Roseiflexus castenholzii (strain DSM 13941 / HLO8).